The primary structure comprises 219 residues: Dephospho-CoA kinase (219 aa).

In terms of domain architecture, DPCK spans 8–215 (LVGVTGGIGS…EAAASGPDCQ (208 aa)). Residue 16–21 (GSGKST) participates in ATP binding.

Belongs to the CoaE family.

The protein localises to the cytoplasm. It carries out the reaction 3'-dephospho-CoA + ATP = ADP + CoA + H(+). It functions in the pathway cofactor biosynthesis; coenzyme A biosynthesis; CoA from (R)-pantothenate: step 5/5. Functionally, catalyzes the phosphorylation of the 3'-hydroxyl group of dephosphocoenzyme A to form coenzyme A. In Chlorobium luteolum (strain DSM 273 / BCRC 81028 / 2530) (Pelodictyon luteolum), this protein is Dephospho-CoA kinase.